An 841-amino-acid chain; its full sequence is DNA ligase (841 aa).

NAD(+)-binding positions include 33-37 (DAQYD), 82-83 (SL), and glutamate 114. The N6-AMP-lysine intermediate role is filled by lysine 116. Arginine 137, glutamate 174, lysine 300, and lysine 324 together coordinate NAD(+). 4 residues coordinate Zn(2+): cysteine 418, cysteine 421, cysteine 436, and cysteine 442. Residues 758 to 841 (EKTGPLDGQT…AFLGEHGQQR (84 aa)) enclose the BRCT domain.

Belongs to the NAD-dependent DNA ligase family. LigA subfamily. Requires Mg(2+) as cofactor. Mn(2+) serves as cofactor.

It catalyses the reaction NAD(+) + (deoxyribonucleotide)n-3'-hydroxyl + 5'-phospho-(deoxyribonucleotide)m = (deoxyribonucleotide)n+m + AMP + beta-nicotinamide D-nucleotide.. DNA ligase that catalyzes the formation of phosphodiester linkages between 5'-phosphoryl and 3'-hydroxyl groups in double-stranded DNA using NAD as a coenzyme and as the energy source for the reaction. It is essential for DNA replication and repair of damaged DNA. The protein is DNA ligase of Xanthomonas oryzae pv. oryzae (strain MAFF 311018).